Reading from the N-terminus, the 428-residue chain is Enolase (428 aa).

A (2R)-2-phosphoglycerate-binding site is contributed by Q162. The active-site Proton donor is E204. D241, E283, and D310 together coordinate Mg(2+). (2R)-2-phosphoglycerate is bound by residues K335, R364, S365, and K386. Residue K335 is the Proton acceptor of the active site.

The protein belongs to the enolase family. Mg(2+) is required as a cofactor.

Its subcellular location is the cytoplasm. The protein resides in the secreted. The protein localises to the cell surface. The enzyme catalyses (2R)-2-phosphoglycerate = phosphoenolpyruvate + H2O. It functions in the pathway carbohydrate degradation; glycolysis; pyruvate from D-glyceraldehyde 3-phosphate: step 4/5. Catalyzes the reversible conversion of 2-phosphoglycerate (2-PG) into phosphoenolpyruvate (PEP). It is essential for the degradation of carbohydrates via glycolysis. This chain is Enolase, found in Rhodococcus opacus (strain B4).